Here is a 398-residue protein sequence, read N- to C-terminus: Growth-regulating factor 3 (398 aa).

The segment covering M1–Q17 has biased composition (low complexity). The interval M1–H32 is disordered. In terms of domain architecture, QLQ spans F76 to K111. Residues D144–T188 form the WRC domain. Short sequence motifs (bipartite nuclear localization signal) lie at residues R149–R159 and R177–K184. Polar residues-rich tracts occupy residues S299–Q350 and P383–H398. Residues S299–H398 form a disordered region.

This sequence belongs to the GRF family. In terms of tissue distribution, strongly expressed in actively growing and developing tissues, such as roots, upper stems, and shoot tips containing the shoot apical meristem (SAM) and flower buds. Also expressed in mature flowers, but weakly expressed in mature stems and leaves.

Its subcellular location is the nucleus. Its function is as follows. Transcription activator that plays a role in the regulation of cell expansion in leaf and cotyledons tissues. Component of a network formed by miR396, the GRFs and their interacting factors (GIFs) acting in the regulation of meristem function, at least partially through the control of cell proliferation. microRNA396-GRF1/GRF3 regulatory module acts as a developmental regulator in the reprogramming of root cells during cyst nematode infection, leading to the formation of the syncytium. This Arabidopsis thaliana (Mouse-ear cress) protein is Growth-regulating factor 3 (GRF3).